A 113-amino-acid chain; its full sequence is MELAQNARMNSLFEFYGALLTAKQHSYLSLYYGDDFSLGEIAEEYQVSRQAVYDNIRRTEKILEGYEAKLHLFQNYEQQNASADALQKYIQAQYPNDQQLAKLLADLLNLTEQ.

The protein belongs to the UPF0122 family.

Its function is as follows. Might take part in the signal recognition particle (SRP) pathway. This is inferred from the conservation of its genetic proximity to ftsY/ffh. May be a regulatory protein. The polypeptide is UPF0122 protein LCA_0713 (Latilactobacillus sakei subsp. sakei (strain 23K) (Lactobacillus sakei subsp. sakei)).